The following is a 127-amino-acid chain: MNLIAKLEQEEIERALAGKTIPEFAPGDTVIVSVNVVEGNRKRVQAYEGVVIAKRNRGLNSSFIVRKISSGEGVERTFQTYSPLLASIVVKRRGDVRRAKLYYLRERSGKSARIKEKLVSKDRAAQA.

This sequence belongs to the bacterial ribosomal protein bL19 family.

In terms of biological role, this protein is located at the 30S-50S ribosomal subunit interface and may play a role in the structure and function of the aminoacyl-tRNA binding site. This chain is Large ribosomal subunit protein bL19, found in Paraburkholderia phymatum (strain DSM 17167 / CIP 108236 / LMG 21445 / STM815) (Burkholderia phymatum).